A 145-amino-acid chain; its full sequence is Aminoglycoside N(6')-acetyltransferase type 1 (145 aa).

One can recognise an N-acetyltransferase domain in the interval 1 to 145 (MDIRQMNRTH…ERVIFYRKRC (145 aa)). Substrate is bound by residues tryptophan 22, histidine 25, tyrosine 66, and glutamate 79. Acetyl-CoA-binding positions include 81–83 (IFV) and 89–94 (QRGVAK). Aspartate 115 serves as a coordination point for substrate. Asparagine 120 lines the acetyl-CoA pocket. A substrate-binding site is contributed by glutamate 136.

As to quaternary structure, homodimer.

The enzyme catalyses kanamycin B + acetyl-CoA = N(6')-acetylkanamycin B + CoA + H(+). Functionally, catalyzes the transfer of an acetyl group from acetyl-CoA to the 6'-amino group of aminoglycoside molecules conferring resistance to antibiotics containing the purpurosamine ring. In Salmonella typhimurium (strain LT2 / SGSC1412 / ATCC 700720), this protein is Aminoglycoside N(6')-acetyltransferase type 1.